The following is a 92-amino-acid chain: N(2)-fixation sustaining protein CowN (92 aa).

This sequence belongs to the CowN family.

Is required to sustain N(2)-dependent growth in the presence of low levels of carbon monoxide (CO). Probably acts by protecting the N(2) fixation ability of the nitrogenase complex, which is inactivated in the presence of CO. The chain is N(2)-fixation sustaining protein CowN from Rhodobacter capsulatus (strain ATCC BAA-309 / NBRC 16581 / SB1003).